A 580-amino-acid chain; its full sequence is High affinity choline transporter 1 (580 aa).

Topologically, residues 1–6 (MSFHVE) are extracellular. The helical transmembrane segment at 7 to 27 (GLVAIILFYLLIFLVGIWAAW) threads the bilayer. The Cytoplasmic segment spans residues 28-48 (KTKNSGNPEERSEAIIVGGRD). Residues 49–69 (IGLLVGGFTMTATWVGGGYIN) form a helical membrane-spanning segment. The Extracellular segment spans residues 70-81 (GTAEAVYGPGCG). A helical transmembrane segment spans residues 82-102 (LAWAQAPIGYSLSLILGGLFF). The Cytoplasmic segment spans residues 103–125 (AKPMRSKGYVTMLDPFQQIYGKR). A helical transmembrane segment spans residues 126–146 (MGGLLFIPALMGEMFWAAAIF). Topologically, residues 147-164 (SALGATISVIIDVDVNIS) are extracellular. Residues 165–185 (VIVSALIAILYTLVGGLYSVA) traverse the membrane as a helical segment. The Cytoplasmic segment spans residues 186-191 (YTDVVQ). A helical membrane pass occupies residues 192–212 (LFCIFIGLWISVPFALSHPAV). Topologically, residues 213-237 (TDIGFTAVHAKYQSPWLGTIESVEV) are extracellular. Residues 238 to 258 (YTWLDNFLLLMLGGIPWQAYF) form a helical membrane-spanning segment. The Cytoplasmic portion of the chain corresponds to 259 to 274 (QRVLSSSSATYAQVLS). The chain crosses the membrane as a helical span at residues 275–295 (FLAAFGCLVMALPAICIGAIG). Topologically, residues 296–317 (ASTDWNQTAYGYPDPKTKEEAD) are extracellular. An N-linked (GlcNAc...) asparagine glycan is attached at N301. A helical transmembrane segment spans residues 318–338 (MILPIVLQYLCPVYISFFGLG). Topologically, residues 339 to 376 (AVSAAVMSSADSSILSASSMFARNIYQLSFRQNASDKE) are cytoplasmic. The chain crosses the membrane as a helical span at residues 377 to 397 (IVWVMRITVLVFGASATAMAL). Topologically, residues 398–406 (LTKTVYGLW) are extracellular. Residues 407-427 (YLSSDLVYIIIFPQLLCVLFI) traverse the membrane as a helical segment. The Cytoplasmic segment spans residues 428-435 (KGTNTYGA). A helical membrane pass occupies residues 436-456 (VAGYIFGLFLRITGGEPYLYL). At 457–481 (QPLIFYPGYYSDKNGIYNQRFPFKT) the chain is on the extracellular side. Residues 482–502 (LSMVTSFFTNICVSYLAKYLF) traverse the membrane as a helical segment. Residues 502-580 (FESGTLPPKL…EGSGTEDNLQ (79 aa)) form a mediates interaction with SEC14L1 region. The Cytoplasmic portion of the chain corresponds to 503 to 580 (ESGTLPPKLD…EGSGTEDNLQ (78 aa)). The short motif at 527 to 532 (DKTILV) is the Dileucine-like motif element.

Belongs to the sodium:solute symporter (SSF) (TC 2.A.21) family. In terms of assembly, homooligomerizes at cell surface. Interacts with SEC14L1; may regulate SLC5A7. Post-translationally, phosphorylated by PKC and dephosphorylated by PP1/PP2A. In terms of tissue distribution, found in spinal cord, brain-stem, mid-brain and striatum. Specific for cholinergic neurons.

Its subcellular location is the presynaptic cell membrane. The protein resides in the cell projection. The protein localises to the axon. It is found in the early endosome membrane. It localises to the cytoplasmic vesicle. Its subcellular location is the secretory vesicle. The protein resides in the synaptic vesicle membrane. It carries out the reaction choline(out) + n Na(+)(out) = choline(in) + n Na(+)(in). Its activity is regulated as follows. Choline uptake activity is regulated by SLC5A7/CHT1 internalization (inactive form) from the cell surface and recycling of internalized SLC5A7/CHT1 into the cell surface (active form). Activated by extracellular chloride ion. Specifically inhibited by nanomolar concentrations of hemicholinium 3. In terms of biological role, high-affinity Na(+)-coupled choline transmembrane symporter. Functions as an electrogenic, voltage-dependent transporter with variable charge/choline stoichiometry. Choline uptake and choline-induced current is also Cl(-)-dependent where Cl(-) is likely a regulatory ion rather than cotransported ion. Plays a critical role in acetylcholine (ACh) synthesis by taking up the substrate choline from the synaptic cleft into the presynaptic nerve terminals after neurotransmitter release. SLC5A7/CHT1-mediated choline high-affinity transport in cholinergic neurons is the rate-limiting step for production of ACh, thereby facilitating communication by subsequent action potentials. Localized predominantly in presynaptic terminal intracellular organelles, and translocated to the plasma membrane in active form in response to neuronal activity. This chain is High affinity choline transporter 1, found in Mus musculus (Mouse).